The chain runs to 369 residues: C-C chemokine receptor type 9 (369 aa).

Residues 1–48 (MMPTELTSLIPGMFDDFSYDSTASTDDYMNLNFSSFFCKKNNVRQFAS) are Extracellular-facing. A glycan (N-linked (GlcNAc...) asparagine) is linked at Asn32. 2 disulfide bridges follow: Cys38–Cys289 and Cys119–Cys198. A helical membrane pass occupies residues 49 to 74 (HFLPPLYWLVFIVGTLGNSLVILVYW). Residues 75-85 (YCTRVKTMTDM) lie on the Cytoplasmic side of the membrane. Residues 86–109 (FLLNLAIADLLFLATLPFWAIAAA) form a helical membrane-spanning segment. Residues 110-120 (GQWMFQTFMCK) are Extracellular-facing. The helical transmembrane segment at 121–150 (VVNSMYKMNFYSCVLLIMCISVDRYIAIVQ) threads the bilayer. Topologically, residues 151-159 (AMKAQVWRQ) are cytoplasmic. Residues 160 to 185 (KRLLYSKMVCITIWVMAAVLCTPEIL) traverse the membrane as a helical segment. The Extracellular portion of the chain corresponds to 186 to 208 (YSQVSGESGIATCTMVYPKDKNA). Residues 209–243 (KLKSAVLILKVTLGFFLPFMVMAFCYTIIIHTLVQ) form a helical membrane-spanning segment. The Cytoplasmic segment spans residues 244 to 248 (AKKSS). The chain crosses the membrane as a helical span at residues 249 to 283 (KHKALKVTITVLTVFIMSQFPYNSILVVQAVDAYA). The Extracellular segment spans residues 284–290 (MFISNCT). A helical membrane pass occupies residues 291–321 (ISTNIDICFQVTQTIAFFHSCLNPVLYVFVG). Residues 322-369 (ERFRRDLVKTLKNLGCISQAQWVSFTRREGSLKLSSMLLETTSGALSL) lie on the Cytoplasmic side of the membrane.

This sequence belongs to the G-protein coupled receptor 1 family. Highly expressed in the thymus and low in lymph nodes and spleen.

Its subcellular location is the cell membrane. Its function is as follows. Receptor for chemokine SCYA25/TECK. Subsequently transduces a signal by increasing the intracellular calcium ions level. In Mus musculus (Mouse), this protein is C-C chemokine receptor type 9 (Ccr9).